The following is a 28-amino-acid chain: HSDAVFTDNYTRLRKQMAVKKYLNSILN.

Asn28 is subject to Asparagine amide.

This sequence belongs to the glucagon family.

Its subcellular location is the secreted. VIP is a neuropeptide involved in a diverse array of physiological processes through activating the PACAP subfamily of class B1 G protein-coupled receptors: VIP receptor 1 (VPR1) and VIP receptor 2 (VPR2). Abundantly expressed throughout the CNS and peripheral nervous systems where they primarily exert neuroprotective and immune modulatory roles. Also causes vasodilation, lowers arterial blood pressure, stimulates myocardial contractility, increases glycogenolysis and relaxes the smooth muscle of trachea, stomach and gall bladder. This chain is Vasoactive intestinal peptide (VIP), found in Canis lupus familiaris (Dog).